We begin with the raw amino-acid sequence, 114 residues long: Probable non-functional T cell receptor beta variable 6-7 (114 aa).

The N-terminal stretch at 1 to 21 is a signal peptide; sequence MSLGLLCCVAFSLLWAGPMNA. In terms of domain architecture, Ig-like spans 22 to 114; sequence GVTQTPKFHV…TSVYFCASSY (93 aa). A disulfide bridge links Cys42 with Cys110. Asn84 carries an N-linked (GlcNAc...) asparagine glycan.

In terms of assembly, alpha-beta TR is a heterodimer composed of an alpha and beta chain; disulfide-linked. The alpha-beta TR is associated with the transmembrane signaling CD3 coreceptor proteins to form the TR-CD3 (TcR or TCR). The assembly of alpha-beta TR heterodimers with CD3 occurs in the endoplasmic reticulum where a single alpha-beta TR heterodimer associates with one CD3D-CD3E heterodimer, one CD3G-CD3E heterodimer and one CD247 homodimer forming a stable octameric structure. CD3D-CD3E and CD3G-CD3E heterodimers preferentially associate with TR alpha and TR beta chains, respectively. The association of the CD247 homodimer is the last step of TcR assembly in the endoplasmic reticulum and is required for transport to the cell surface.

It localises to the cell membrane. Functionally, probable non-functional open reading frame (ORF) of V region of the variable domain of T cell receptor (TR) beta chain. Non-functional ORF generally cannot participate in the synthesis of a productive T cell receptor (TR) chain due to altered V-(D)-J or switch recombination and/or splicing site (at mRNA level) and/or conserved amino acid change (protein level). Alpha-beta T cell receptors are antigen specific receptors which are essential to the immune response and are present on the cell surface of T lymphocytes. Recognize peptide-major histocompatibility (MH) (pMH) complexes that are displayed by antigen presenting cells (APC), a prerequisite for efficient T cell adaptive immunity against pathogens. Binding of alpha-beta TR to pMH complex initiates TR-CD3 clustering on the cell surface and intracellular activation of LCK that phosphorylates the ITAM motifs of CD3G, CD3D, CD3E and CD247 enabling the recruitment of ZAP70. In turn ZAP70 phosphorylates LAT, which recruits numerous signaling molecules to form the LAT signalosome. The LAT signalosome propagates signal branching to three major signaling pathways, the calcium, the mitogen-activated protein kinase (MAPK) kinase and the nuclear factor NF-kappa-B (NF-kB) pathways, leading to the mobilization of transcription factors that are critical for gene expression and essential for T cell growth and differentiation. The T cell repertoire is generated in the thymus, by V-(D)-J rearrangement. This repertoire is then shaped by intrathymic selection events to generate a peripheral T cell pool of self-MH restricted, non-autoaggressive T cells. Post-thymic interaction of alpha-beta TR with the pMH complexes shapes TR structural and functional avidity. The chain is Probable non-functional T cell receptor beta variable 6-7 from Homo sapiens (Human).